The primary structure comprises 167 residues: Ribosome maturation factor RimM (167 aa).

A PRC barrel domain is found at 94–165 (ENEFYYSDII…KIIITPMEGL (72 aa)).

Belongs to the RimM family. Binds ribosomal protein uS19.

It localises to the cytoplasm. Its function is as follows. An accessory protein needed during the final step in the assembly of 30S ribosomal subunit, possibly for assembly of the head region. Essential for efficient processing of 16S rRNA. May be needed both before and after RbfA during the maturation of 16S rRNA. It has affinity for free ribosomal 30S subunits but not for 70S ribosomes. This is Ribosome maturation factor RimM from Staphylococcus aureus (strain MRSA252).